The following is a 198-amino-acid chain: Recombination protein RecR (198 aa).

The C4-type zinc-finger motif lies at 59 to 74 (CSLCCNYTDHDPCPIC). Residues 82-175 (TLLCIVEQPR…KVTRIAHGLP (94 aa)) form the Toprim domain.

This sequence belongs to the RecR family.

May play a role in DNA repair. It seems to be involved in an RecBC-independent recombinational process of DNA repair. It may act with RecF and RecO. This is Recombination protein RecR from Desulfitobacterium hafniense (strain DSM 10664 / DCB-2).